Consider the following 87-residue polypeptide: Homeotic protein ultrabithorax (87 aa).

The Antp-type hexapeptide signature appears at 22–27 (FYPWMA).

It belongs to the Antp homeobox family. In the embryo, expression is seen in the epidermis, somatic and visceral mesoderm, and the peripheral and central nervous system.

Its subcellular location is the nucleus. Its function is as follows. Sequence-specific transcription factor which is part of a developmental regulatory system that provides cells with specific positional identities on the anterior-posterior axis. Binds the consensus region 5'-TTAAT[GT][GA]-3'. This homeotic protein controls development of the cells in the posterior thoracic and first abdominal segments. It activates the synthesis of the decapentaplegic (DPP) growth factor. The protein is Homeotic protein ultrabithorax (Ubx) of Drosophila hydei (Fruit fly).